A 454-amino-acid polypeptide reads, in one-letter code: MALNVVILAAGKGTRMRSDLPKVLHPIAHKSMVQHVIDTAHEVGSDAIQLVYGYGADKLQAKLGEQQLNWVLQAEQLGTGHAVAQANDNISDDDTVLILYGDVPLIQASTLESLLAVRDENGLAILTVNLPNPMGYGRIVREDNKVVGIVEQKDANAEQLAISEINTGIMAAPGKQLKAWLGQLSSDNAQGEYYLTDIVAMAHKDGVAITTAQPESAVEVEGANNRVQLAQLERAYQARAAEKLMLEGANLRDPARIDIRGDVSVGMDVMIDVNVVIEGTVNIGNNVTIGAGAILIDCDIADNAEIKPYSIVENAKVGVKASAGPFARLRPGAELAEDAHIGNFVEMKKALLGKGSKAGHLAYIGDATIGCGVNIGAGTITCNYDGANKFQTIIEDNVFVGSDTQLVAPITIGKGATLGAGSTITKDVAADELVITRVKQRHISGWARPVKKAK.

A pyrophosphorylase region spans residues Met1–Arg226. UDP-N-acetyl-alpha-D-glucosamine is bound by residues Leu8 to Gly11, Lys22, Gln73, Gly78 to Thr79, Tyr100 to Asp102, Gly137, Glu151, Asn166, and Asn224. Residue Asp102 coordinates Mg(2+). Asn224 is a Mg(2+) binding site. Residues Val227 to Glu247 form a linker region. The interval Gly248–Lys454 is N-acetyltransferase. UDP-N-acetyl-alpha-D-glucosamine-binding residues include Arg330 and Lys348. The active-site Proton acceptor is the His360. UDP-N-acetyl-alpha-D-glucosamine is bound by residues Tyr363 and Asn374. Acetyl-CoA-binding positions include Ala377, Asn383–Tyr384, Ser402, Ala420, and Arg437.

The protein in the N-terminal section; belongs to the N-acetylglucosamine-1-phosphate uridyltransferase family. In the C-terminal section; belongs to the transferase hexapeptide repeat family. As to quaternary structure, homotrimer. The cofactor is Mg(2+).

It localises to the cytoplasm. The catalysed reaction is alpha-D-glucosamine 1-phosphate + acetyl-CoA = N-acetyl-alpha-D-glucosamine 1-phosphate + CoA + H(+). It catalyses the reaction N-acetyl-alpha-D-glucosamine 1-phosphate + UTP + H(+) = UDP-N-acetyl-alpha-D-glucosamine + diphosphate. It participates in nucleotide-sugar biosynthesis; UDP-N-acetyl-alpha-D-glucosamine biosynthesis; N-acetyl-alpha-D-glucosamine 1-phosphate from alpha-D-glucosamine 6-phosphate (route II): step 2/2. It functions in the pathway nucleotide-sugar biosynthesis; UDP-N-acetyl-alpha-D-glucosamine biosynthesis; UDP-N-acetyl-alpha-D-glucosamine from N-acetyl-alpha-D-glucosamine 1-phosphate: step 1/1. Its pathway is bacterial outer membrane biogenesis; LPS lipid A biosynthesis. Catalyzes the last two sequential reactions in the de novo biosynthetic pathway for UDP-N-acetylglucosamine (UDP-GlcNAc). The C-terminal domain catalyzes the transfer of acetyl group from acetyl coenzyme A to glucosamine-1-phosphate (GlcN-1-P) to produce N-acetylglucosamine-1-phosphate (GlcNAc-1-P), which is converted into UDP-GlcNAc by the transfer of uridine 5-monophosphate (from uridine 5-triphosphate), a reaction catalyzed by the N-terminal domain. This chain is Bifunctional protein GlmU, found in Shewanella piezotolerans (strain WP3 / JCM 13877).